The sequence spans 406 residues: Arginine biosynthesis bifunctional protein ArgJ (406 aa).

Substrate-binding residues include Thr-154, Lys-180, Thr-191, Glu-278, Asn-401, and Thr-406. The Nucleophile role is filled by Thr-191.

It belongs to the ArgJ family. As to quaternary structure, heterotetramer of two alpha and two beta chains.

It localises to the cytoplasm. The catalysed reaction is N(2)-acetyl-L-ornithine + L-glutamate = N-acetyl-L-glutamate + L-ornithine. The enzyme catalyses L-glutamate + acetyl-CoA = N-acetyl-L-glutamate + CoA + H(+). It functions in the pathway amino-acid biosynthesis; L-arginine biosynthesis; L-ornithine and N-acetyl-L-glutamate from L-glutamate and N(2)-acetyl-L-ornithine (cyclic): step 1/1. The protein operates within amino-acid biosynthesis; L-arginine biosynthesis; N(2)-acetyl-L-ornithine from L-glutamate: step 1/4. Catalyzes two activities which are involved in the cyclic version of arginine biosynthesis: the synthesis of N-acetylglutamate from glutamate and acetyl-CoA as the acetyl donor, and of ornithine by transacetylation between N(2)-acetylornithine and glutamate. The protein is Arginine biosynthesis bifunctional protein ArgJ of Gloeobacter violaceus (strain ATCC 29082 / PCC 7421).